The sequence spans 153 residues: Prostaglandin E synthase (153 aa).

Topologically, residues 1–13 (MPPSGLELMNGQV) are lumenal. The chain crosses the membrane as a helical span at residues 14–42 (LPAFLLCSALLVIKMYVVAVITGQVRLRK). R39 lines the glutathione pocket. Residues 43-61 (KAFANPEDAQRHGGLQYCR) are Cytoplasmic-facing. Residues 62-91 (NDPDVERCLRAHRNDMETIYPFLFLGFVYS) form a helical membrane-spanning segment. A glutathione-binding site is contributed by 74–78 (RNDME). The Lumenal portion of the chain corresponds to 92–96 (FLGPN). Residues 97-120 (PFVARMHFLVFFLGRMVHTVAYLG) form a helical membrane-spanning segment. Glutathione-binding residues include H114 and Y118. Residues 121 to 124 (KLRA) lie on the Cytoplasmic side of the membrane. The helical transmembrane segment at 125–153 (PTRSLAYTLAQLPCASMALQIVWEAARHL) threads the bilayer. 127–131 (RSLAY) contacts glutathione.

The protein belongs to the MAPEG family. In terms of assembly, homotrimer. The cofactor is glutathione.

It localises to the membrane. Its subcellular location is the cytoplasm. The protein resides in the perinuclear region. The catalysed reaction is prostaglandin H2 = prostaglandin E2. The enzyme catalyses 2-glyceryl-prostaglandin H2 = 2-glyceryl-prostaglandin E2. It carries out the reaction prostaglandin G2 = (15S)-15-hydroperoxy-prostaglandin E2. It catalyses the reaction 1-chloro-2,4-dinitrobenzene + glutathione = 2,4-dinitrophenyl-S-glutathione + chloride + H(+). The catalysed reaction is (5S)-hydroperoxy-(6E,8Z,11Z,14Z)-eicosatetraenoate + 2 glutathione = (5S)-hydroxy-(6E,8Z,11Z,14Z)-eicosatetraenoate + glutathione disulfide + H2O. Its pathway is lipid metabolism; prostaglandin biosynthesis. Terminal enzyme of the cyclooxygenase (COX)-2-mediated prostaglandin E2 (PGE2) biosynthetic pathway. Catalyzes the glutathione-dependent oxidoreduction of prostaglandin endoperoxide H2 (PGH2) to prostaglandin E2 (PGE2) in response to inflammatory stimuli. Plays a key role in inflammation response, fever and pain. Also catalyzes the oxidoreduction of endocannabinoids into prostaglandin glycerol esters and PGG2 into 15-hydroperoxy-PGE2. In addition, displays low glutathione transferase and glutathione-dependent peroxidase activities, toward 1-chloro-2,4-dinitrobenzene and 5-hydroperoxyicosatetraenoic acid (5-HPETE), respectively. The polypeptide is Prostaglandin E synthase (PTGES) (Bos taurus (Bovine)).